The primary structure comprises 232 residues: Nucleolar protein 16 (232 aa).

Basic residues predominate over residues 1–14; the sequence is MGRELQKRKKRSSR. 2 disordered regions span residues 1-20 and 113-161; these read MGRE…VQTH and RSDN…QSSR. Over residues 132–154 the composition is skewed to basic and acidic residues; sequence EEPKPKNPTHDIEWHGISDDRQE.

Belongs to the NOP16 family. In terms of assembly, component of the pre-66S ribosomal particle.

The protein localises to the nucleus. It is found in the nucleolus. Its function is as follows. Involved in the biogenesis of the 60S ribosomal subunit. This chain is Nucleolar protein 16 (nop-16), found in Neurospora crassa (strain ATCC 24698 / 74-OR23-1A / CBS 708.71 / DSM 1257 / FGSC 987).